A 323-amino-acid chain; its full sequence is Viral cathepsin (323 aa).

An N-terminal signal peptide occupies residues 1 to 16 (MNKILFYLFVYGVVNS). Residues 17–112 (AAYDLLKAPN…IVLDQPPGKG (96 aa)) constitute a propeptide, activation peptide. Cystine bridges form between C133-C174, C167-C207, and C262-C310. The active site involves C136. The N-linked (GlcNAc...) asparagine; by host glycan is linked to N158. Active-site residues include H269 and N289.

This sequence belongs to the peptidase C1 family. Interacts with chitinase/CHIA; this interaction maintains VCATH in the host endoplasmic reticulum. Post-translationally, synthesized as an inactive proenzyme and activated by proteolytic removal of the inhibitory propeptide.

It is found in the host endoplasmic reticulum. It carries out the reaction Endopeptidase of broad specificity, hydrolyzing substrates of both cathepsin L and cathepsin B.. Its function is as follows. Cysteine protease that plays an essential role in host liquefaction to facilitate horizontal transmission of the virus. Accumulates within infected cells as an inactive proenzyme (proV-CATH), which is activated by proteolytic cleavage upon cell death. The chain is Viral cathepsin (VCATH) from Lepidoptera (butterflies and moths).